The following is a 497-amino-acid chain: Alkane hydroxylase MAH1 (497 aa).

Residues 3–23 form a helical membrane-spanning segment; sequence MLGFYVTFIFFLVCLFTYFFL. Cys444 serves as a coordination point for heme.

This sequence belongs to the cytochrome P450 family. It depends on heme as a cofactor. As to expression, expressed in the expanding regions of the inflorescence stems, specifically to the epidermal pavement cells, petioles and siliques.

The protein localises to the endoplasmic reticulum membrane. Its function is as follows. Involved in the formation of secondary alcohols and ketones in stem cuticular wax. Catalyzes the hydroxylation of a methylene unit in the middle of alkane molecules to form secondary alcohols and possibly also a second hydroxylation leading to the corresponding ketones. The protein is Alkane hydroxylase MAH1 of Arabidopsis thaliana (Mouse-ear cress).